Reading from the N-terminus, the 254-residue chain is MLTIAGVEFESRLFTGTGKFSSSQLMLESIKASQSQLVTVAMKRIDLKTGADDLLSPLRQAGVRLLPNTSGARNAKEAIFAAELAREMLGTQWVKLEIHPDPKYLMPDAVETLAAAKTLCERGFIVMPYVHADPVLCRRLEEVGCAAVMPLASPIGTNQGLVTEPFIKMIIEQAKVPVVIDAGIGAPSHAAHAMELGADAVLVNTAIASSASPIEMALCFKDAVNCGRRAFEAGLGRVQTQAVHTSPLTGFLQQ.

The active-site Schiff-base intermediate with DXP is the Lys-95. 1-deoxy-D-xylulose 5-phosphate contacts are provided by residues Gly-156, 182–183, and 204–205; these read AG and NT.

Belongs to the ThiG family. As to quaternary structure, homotetramer. Forms heterodimers with either ThiH or ThiS.

The protein resides in the cytoplasm. It carries out the reaction [ThiS sulfur-carrier protein]-C-terminal-Gly-aminoethanethioate + 2-iminoacetate + 1-deoxy-D-xylulose 5-phosphate = [ThiS sulfur-carrier protein]-C-terminal Gly-Gly + 2-[(2R,5Z)-2-carboxy-4-methylthiazol-5(2H)-ylidene]ethyl phosphate + 2 H2O + H(+). Its pathway is cofactor biosynthesis; thiamine diphosphate biosynthesis. Functionally, catalyzes the rearrangement of 1-deoxy-D-xylulose 5-phosphate (DXP) to produce the thiazole phosphate moiety of thiamine. Sulfur is provided by the thiocarboxylate moiety of the carrier protein ThiS. In vitro, sulfur can be provided by H(2)S. This Shewanella sp. (strain MR-7) protein is Thiazole synthase.